Here is a 433-residue protein sequence, read N- to C-terminus: Protein arginine N-methyltransferase 2 (433 aa).

Residues 1 to 20 (MATSGDCPRSESQGEEPAEC) form a disordered region. 2 interaction with ESR1 regions span residues 1-277 (MATS…SALK) and 133-275 (KESL…NLSA). The 60-residue stretch at 30 to 89 (VQPEEFVAIADYAATDETQLSFLRGEKILILRQTTADWWWGERAGCCGYIPANHVGKHVD) folds into the SH3 domain. 2 positions are modified to asymmetric dimethylarginine: Arg61 and Arg72. The interaction with RB1 stretch occupies residues 83-207 (HVGKHVDEYD…DVVLPEKVDV (125 aa)). The 334-residue stretch at 99 to 432 (DEEYFGSYGT…KVGEKVFPIW (334 aa)) folds into the SAM-dependent MTase PRMT-type domain. 5 residues coordinate S-adenosyl-L-methionine: His112, Arg121, Gly145, Glu168, and Glu197. Catalysis depends on residues Glu211 and Glu220.

It belongs to the class I-like SAM-binding methyltransferase superfamily. Protein arginine N-methyltransferase family. In terms of assembly, self-associates. Interacts with RB1 and E2F1. Interacts with NCOA6 coactivator. Interacts (via SH3 domain) with PRMT8. Interacts with AR. Interacts with NFKBIA. Interacts with ESR1, ESR2, PGR, PPARG, RARA, RXRA and THRB. Interacts with HNRNPUL1. In terms of tissue distribution, widely expressed. Highly expressed in androgen target organs such as heart, prostate, skeletal muscle, ovary and spinal cord.

Its subcellular location is the cytoplasm. The protein localises to the nucleus. The protein resides in the nucleolus. The enzyme catalyses L-arginyl-[protein] + 2 S-adenosyl-L-methionine = N(omega),N(omega)-dimethyl-L-arginyl-[protein] + 2 S-adenosyl-L-homocysteine + 2 H(+). Arginine methyltransferase that methylates the guanidino nitrogens of arginyl residues in proteins such as STAT3, FBL, histone H4. Acts as a coactivator (with NCOA2) of the androgen receptor (AR)-mediated transactivation. Acts as a coactivator (with estrogen) of estrogen receptor (ER)-mediated transactivation. Enhances PGR, PPARG, RARA-mediated transactivation. May inhibit NF-kappa-B transcription and promote apoptosis. Represses E2F1 transcriptional activity (in a RB1-dependent manner). May be involved in growth regulation. This chain is Protein arginine N-methyltransferase 2 (PRMT2), found in Homo sapiens (Human).